The sequence spans 226 residues: Leucyl/phenylalanyl-tRNA--protein transferase (226 aa).

The protein belongs to the L/F-transferase family.

The protein resides in the cytoplasm. It catalyses the reaction N-terminal L-lysyl-[protein] + L-leucyl-tRNA(Leu) = N-terminal L-leucyl-L-lysyl-[protein] + tRNA(Leu) + H(+). The enzyme catalyses N-terminal L-arginyl-[protein] + L-leucyl-tRNA(Leu) = N-terminal L-leucyl-L-arginyl-[protein] + tRNA(Leu) + H(+). It carries out the reaction L-phenylalanyl-tRNA(Phe) + an N-terminal L-alpha-aminoacyl-[protein] = an N-terminal L-phenylalanyl-L-alpha-aminoacyl-[protein] + tRNA(Phe). Its function is as follows. Functions in the N-end rule pathway of protein degradation where it conjugates Leu, Phe and, less efficiently, Met from aminoacyl-tRNAs to the N-termini of proteins containing an N-terminal arginine or lysine. The protein is Leucyl/phenylalanyl-tRNA--protein transferase of Bradyrhizobium diazoefficiens (strain JCM 10833 / BCRC 13528 / IAM 13628 / NBRC 14792 / USDA 110).